Here is a 598-residue protein sequence, read N- to C-terminus: Urease subunit alpha (598 aa).

Ni(2+)-binding residues include His141, His143, and Lys223. Lys223 is subject to N6-carboxylysine. Substrate is bound at residue His225. Ni(2+) contacts are provided by His252 and His278. Catalysis depends on His326, which acts as the Proton donor. Residue Asp366 coordinates Ni(2+).

It belongs to the metallo-dependent hydrolases superfamily. Urease alpha subunit family. In terms of assembly, heterotrimer of UreA (gamma), UreB (beta) and UreC (alpha) subunits. Three heterotrimers associate to form the active enzyme. Ni cation is required as a cofactor. Post-translationally, carboxylation allows a single lysine to coordinate two nickel ions.

The protein localises to the cytoplasm. It catalyses the reaction urea + 2 H2O + H(+) = hydrogencarbonate + 2 NH4(+). Its pathway is nitrogen metabolism; urea degradation; CO(2) and NH(3) from urea (urease route): step 1/1. The protein is Urease subunit alpha of Ureaplasma parvum serovar 3 (strain ATCC 27815 / 27 / NCTC 11736).